The primary structure comprises 308 residues: Probable pyridoxal 5'-phosphate synthase subunit pdx-1 (308 aa).

Asp-30 serves as a coordination point for D-ribose 5-phosphate. The active-site Schiff-base intermediate with D-ribose 5-phosphate is Lys-87. Gly-159 lines the D-ribose 5-phosphate pocket. Residue Arg-171 coordinates D-glyceraldehyde 3-phosphate. D-ribose 5-phosphate contacts are provided by residues Gly-224 and 245–246 (GS).

This sequence belongs to the PdxS/SNZ family.

The enzyme catalyses aldehydo-D-ribose 5-phosphate + D-glyceraldehyde 3-phosphate + L-glutamine = pyridoxal 5'-phosphate + L-glutamate + phosphate + 3 H2O + H(+). Its pathway is cofactor biosynthesis; pyridoxal 5'-phosphate biosynthesis. Catalyzes the formation of pyridoxal 5'-phosphate from ribose 5-phosphate (RBP), glyceraldehyde 3-phosphate (G3P) and ammonia. The ammonia is provided by pdx-2. Can also use ribulose 5-phosphate and dihydroxyacetone phosphate as substrates, resulting from enzyme-catalyzed isomerization of RBP and G3P, respectively. Also plays an indirect role in resistance to singlet oxygen-generating photosensitizers. The protein is Probable pyridoxal 5'-phosphate synthase subunit pdx-1 (pdx-1) of Neurospora crassa (strain ATCC 24698 / 74-OR23-1A / CBS 708.71 / DSM 1257 / FGSC 987).